The following is an 84-amino-acid chain: Large ribosomal subunit protein bL27 (84 aa).

The interval Met-1–Leu-21 is disordered.

Belongs to the bacterial ribosomal protein bL27 family.

The protein is Large ribosomal subunit protein bL27 of Chlorobium luteolum (strain DSM 273 / BCRC 81028 / 2530) (Pelodictyon luteolum).